A 524-amino-acid chain; its full sequence is CDC50-related protein CDC50.1 (524 aa).

Composition is skewed to polar residues over residues 1-19 (MGENSTTGLRGQADVSQFS) and 26-39 (TLSSPPTGQRQQSL). Disordered regions lie at residues 1 to 40 (MGENSTTGLRGQADVSQFSDAAVEPTLSSPPTGQRQQSLP) and 52 to 86 (APSVGGGGGWPFQRQGSSRLTSRGTSLSSCSDAGS). Over 1–181 (MGENSTTGLR…GMYPLWSAGV (181 aa)) the chain is Cytoplasmic. The segment covering 67–80 (GSSRLTSRGTSLSS) has biased composition (low complexity). A helical transmembrane segment spans residues 182-202 (VLRLCLLGALFFVSVGAWLIF). At 203–473 (EDEQHVECKL…VQKSRLGGRS (271 aa)) the chain is on the extracellular side. Residues Asn-297 and Asn-339 are each glycosylated (N-linked (GlcNAc...) asparagine). Residues 474 to 494 (LFIGIAYLSFGCLLTMLVFYM) form a helical membrane-spanning segment. The Cytoplasmic segment spans residues 495–524 (LWKKWQYRREGEEIRDLRWQTKTRGSKKTK).

It belongs to the CDC50/LEM3 family. As to quaternary structure, interacts with GC; the interaction regulates guanylate cyclase GC trafficking and sensing environmental changes.

It is found in the membrane. In terms of biological role, in tachyzoites, required for the cellular trafficking of guanylate cyclase GC and UGO to the cell membrane. May play a role in the folding of the GC P-type ATPase-like domain to sense vacuolar changes in phosphatidic acid and pH levels which trigger parasite egress. This is CDC50-related protein CDC50.1 from Toxoplasma gondii (strain ATCC 50853 / GT1).